A 206-amino-acid polypeptide reads, in one-letter code: N-(5'-phosphoribosyl)anthranilate isomerase (206 aa).

This sequence belongs to the TrpF family.

The enzyme catalyses N-(5-phospho-beta-D-ribosyl)anthranilate = 1-(2-carboxyphenylamino)-1-deoxy-D-ribulose 5-phosphate. Its pathway is amino-acid biosynthesis; L-tryptophan biosynthesis; L-tryptophan from chorismate: step 3/5. This chain is N-(5'-phosphoribosyl)anthranilate isomerase, found in Pseudomonas putida (strain ATCC 47054 / DSM 6125 / CFBP 8728 / NCIMB 11950 / KT2440).